A 627-amino-acid polypeptide reads, in one-letter code: tRNA uridine 5-carboxymethylaminomethyl modification enzyme MnmG (627 aa).

FAD contacts are provided by residues 13–18, Val125, and Ser180; that span reads GGGHAG. 274–288 contributes to the NAD(+) binding site; the sequence is GPRYCPSIEDKVVRF. An FAD-binding site is contributed by Gln371.

The protein belongs to the MnmG family. Homodimer. Heterotetramer of two MnmE and two MnmG subunits. Requires FAD as cofactor.

It is found in the cytoplasm. NAD-binding protein involved in the addition of a carboxymethylaminomethyl (cmnm) group at the wobble position (U34) of certain tRNAs, forming tRNA-cmnm(5)s(2)U34. This chain is tRNA uridine 5-carboxymethylaminomethyl modification enzyme MnmG, found in Francisella tularensis subsp. novicida (strain U112).